The sequence spans 47 residues: Small, acid-soluble spore protein N (47 aa).

Over residues 1–12 (MSNPKGSRKHFV) the composition is skewed to basic residues. The tract at residues 1–47 (MSNPKGSRKHFVPNHIGTQPRAAGGNKGKQMQDQSGQHAQVIQTKGE) is disordered. The span at 29–47 (KQMQDQSGQHAQVIQTKGE) shows a compositional bias: polar residues.

It belongs to the SspN family.

It is found in the spore core. In Geobacillus kaustophilus (strain HTA426), this protein is Small, acid-soluble spore protein N.